Consider the following 417-residue polypeptide: Carboxypeptidase B (417 aa).

The first 15 residues, 1–15, serve as a signal peptide directing secretion; sequence MLALLVLVTVALASA. Positions 16 to 110 are cleaved as a propeptide — activation peptide; that stretch reads HHGGEHFEGE…VEAQFDSRVR (95 aa). A Peptidase M14 domain is found at 118-412; that stretch reads KYNKWETIEA…LAIKYVASYV (295 aa). Cysteines 173 and 186 form a disulfide. 2 residues coordinate Zn(2+): H176 and E179. Substrate is bound by residues 176 to 179, R234, and 251 to 252; these read HARE and NR. Disulfide bonds link C245/C268 and C259/C273. Position 304 (H304) interacts with Zn(2+). Residues 305 to 306 and Y356 contribute to the substrate site; that span reads SY. The active-site Proton donor/acceptor is the E378.

This sequence belongs to the peptidase M14 family. Requires Zn(2+) as cofactor. As to expression, pancreas.

Its subcellular location is the secreted. The protein resides in the zymogen granule lumen. The enzyme catalyses Preferential release of a C-terminal lysine or arginine amino acid.. The protein is Carboxypeptidase B (CPB1) of Homo sapiens (Human).